The sequence spans 317 residues: Uridylate kinase (317 aa).

9–12 (KISG) lines the ATP pocket. Gly49 contributes to the UMP binding site. ATP-binding residues include Gly50 and Arg54. Residues Asp69 and 130-137 (TGRPYFTT) each bind UMP. 3 residues coordinate ATP: Asn158, Tyr164, and Asp167.

This sequence belongs to the UMP kinase family. In terms of assembly, homohexamer.

Its subcellular location is the cytoplasm. It catalyses the reaction UMP + ATP = UDP + ADP. It participates in pyrimidine metabolism; CTP biosynthesis via de novo pathway; UDP from UMP (UMPK route): step 1/1. Its activity is regulated as follows. Inhibited by UTP. Its function is as follows. Catalyzes the reversible phosphorylation of UMP to UDP. The protein is Uridylate kinase of Malacoplasma penetrans (strain HF-2) (Mycoplasma penetrans).